The primary structure comprises 244 residues: 3-deoxy-manno-octulosonate cytidylyltransferase (244 aa).

Belongs to the KdsB family.

Its subcellular location is the cytoplasm. It carries out the reaction 3-deoxy-alpha-D-manno-oct-2-ulosonate + CTP = CMP-3-deoxy-beta-D-manno-octulosonate + diphosphate. It participates in nucleotide-sugar biosynthesis; CMP-3-deoxy-D-manno-octulosonate biosynthesis; CMP-3-deoxy-D-manno-octulosonate from 3-deoxy-D-manno-octulosonate and CTP: step 1/1. The protein operates within bacterial outer membrane biogenesis; lipopolysaccharide biosynthesis. In terms of biological role, activates KDO (a required 8-carbon sugar) for incorporation into bacterial lipopolysaccharide in Gram-negative bacteria. This is 3-deoxy-manno-octulosonate cytidylyltransferase from Flavobacterium johnsoniae (strain ATCC 17061 / DSM 2064 / JCM 8514 / BCRC 14874 / CCUG 350202 / NBRC 14942 / NCIMB 11054 / UW101) (Cytophaga johnsonae).